Here is a 124-residue protein sequence, read N- to C-terminus: MPTISQLVRKGRAKITKKSKSAALDSCPQRRGVCTRVYTTTPKKPNSAMRKVARVRLTNGKEVNAYIPGEGHNLQEHSIVLVRGGRVKDLPGVRYHIVRGALDTAGVEGRTQRRSKYGAKRPKK.

Positions 1–24 (MPTISQLVRKGRAKITKKSKSAAL) are disordered. Over residues 9 to 20 (RKGRAKITKKSK) the composition is skewed to basic residues. A 3-methylthioaspartic acid modification is found at aspartate 89. The segment at 105–124 (AGVEGRTQRRSKYGAKRPKK) is disordered. Residues 112-124 (QRRSKYGAKRPKK) are compositionally biased toward basic residues.

This sequence belongs to the universal ribosomal protein uS12 family. In terms of assembly, part of the 30S ribosomal subunit. Contacts proteins S8 and S17. May interact with IF1 in the 30S initiation complex.

Its function is as follows. With S4 and S5 plays an important role in translational accuracy. Functionally, interacts with and stabilizes bases of the 16S rRNA that are involved in tRNA selection in the A site and with the mRNA backbone. Located at the interface of the 30S and 50S subunits, it traverses the body of the 30S subunit contacting proteins on the other side and probably holding the rRNA structure together. The combined cluster of proteins S8, S12 and S17 appears to hold together the shoulder and platform of the 30S subunit. The chain is Small ribosomal subunit protein uS12 from Christiangramia forsetii (strain DSM 17595 / CGMCC 1.15422 / KT0803) (Gramella forsetii).